Consider the following 847-residue polypeptide: MRSFLLLTALLGVAAVAEDGLAAWLRYAPIPHAKSYHKNLPSVIVPLNATAGRPIDTAAYELVDGIKGIFGKRVTLKNETRDDPNLPAVTVGTVEAYAEAGGDVSSVPELIDDGYYLSVAGPSVLILGQNERGALYGTFQYLERLAQGKVSDTSFASNPSAPIRWVNQWDNLQDGGTHGSVERGYGGDSIFFWDGRVRDDLTRASQYARLLASIGLNAVIVNNVNANETILTQENMDGVARIADAFRPYGIQLGLSLNFASPQSLGGLDTFDPFDERVISWWGEITDELYERIPDMAGYLVKANSEGQPGPFTYNRTLADGANLFARALQPHGGIVLFRAFVYDHENLNETLDWKADRANAAVEFFDGLDPQFEDNVVIQIKNGPIDFQVREPVSPLFAHLSQTASAVELQVTQEYLGQQCHLVYLAPMWKEVLDFDLRVDGKDSVVSDIVSGRRFNNTLGGYAGVVNVGLNTTWLGSHLAMSNLYAYGRLAWDPSADSVELLQEWIKMTFSHDQEVVDVITKMSMESWPAYENYSGNLGIQTLTDILLGHYGPNPASQDGNPWGQWTRADADSIGMDRTVWNGTGNAGQYPEEVYQMYENIDTTPDNLLLWFHHVPYTQRLKSGKTVIQHFYDAHYRGSATAQTFVSLWKTIKGKIDKERYEHVLFRLVYQAGHALVWRDSITNFYYNKSGIPDEAGRVGNHPYRIEAEDMELDGYEPYLVSPFEAASGSHCIVTSNNSTEGRASTPLKVKNGKYDIAVNYFDQAIGNSTWRLFLDDDLVGEWKGDLEYILGRAPSPYIDGQTAARITFKHVHIKSRSTLSIVGIPDGMEPAPIDYVSILPEGVID.

Residues 1 to 22 form the signal peptide; sequence MRSFLLLTALLGVAAVAEDGLA. N-linked (GlcNAc...) asparagine glycans are attached at residues N48, N78, N227, N315, N349, N457, N472, N534, N583, N689, N738, N739, and N769.

This sequence belongs to the glycosyl hydrolase 67 family.

It localises to the secreted. The catalysed reaction is an alpha-D-glucuronoside + H2O = D-glucuronate + an alcohol. Its function is as follows. Alpha-glucuronidase involved in the hydrolysis of xylan, a major structural heterogeneous polysaccharide found in plant biomass representing the second most abundant polysaccharide in the biosphere, after cellulose. Releases 4-O-methylglucuronic acid from xylan. This is Alpha-glucuronidase A (aguA) from Emericella nidulans (strain FGSC A4 / ATCC 38163 / CBS 112.46 / NRRL 194 / M139) (Aspergillus nidulans).